The chain runs to 477 residues: PTS system glucose-specific EIICB component (477 aa).

Residues 1–14 (MFKNAFANLQKVGK) lie on the Cytoplasmic side of the membrane. In terms of domain architecture, PTS EIIC type-1 spans 1–388 (MFKNAFANLQ…LDLKTPGRED (388 aa)). The helical transmembrane segment at 15–35 (SLMLPVSVLPIAGILLGVGSA) threads the bilayer. At 36–50 (NFSWLPAVVSHVMAE) the chain is on the periplasmic side. A helical membrane pass occupies residues 51–71 (AGGSVFANMPLIFAIGVALGF). Topologically, residues 72–79 (TNNDGVSA) are cytoplasmic. Residues 80-100 (LAAVVAYGIMVKTMAVVAPLV) form a helical membrane-spanning segment. Topologically, residues 101 to 111 (LHLPAEEIAAK) are periplasmic. Residues 112–132 (HLADTGVLGGIISGAIAAYMF) traverse the membrane as a helical segment. Residues 133 to 151 (NRFYRIKLPEYLGFFAGKR) lie on the Cytoplasmic side of the membrane. Residues 152–172 (FVPIISGLAAIFTGVVLSFVW) traverse the membrane as a helical segment. Topologically, residues 173–190 (PPIGTAIQAFSQWAAYQN) are periplasmic. A helical transmembrane segment spans residues 191-211 (PVVAFGIYGFIERCLVPFGLH). The Cytoplasmic portion of the chain corresponds to 212-248 (HIWNVPFQMQIGEYTNAAGQVFHGDIPRYMAGDPTAG). Residues 249–269 (MLSGGFLFKMYGLPAAAIAIW) traverse the membrane as a helical segment. The Periplasmic portion of the chain corresponds to 270 to 279 (HSAKPENRAK). The helical transmembrane segment at 280 to 300 (VGGIMISAALTSFLTGITEPI) threads the bilayer. The Cytoplasmic segment spans residues 301-309 (EFSFMFVAP). The helical transmembrane segment at 310–330 (ILYIIHAILAGLAFPICILLG) threads the bilayer. Over 331-355 (MRDGTSFSHGLIDFIVLSGNSSKLW) the chain is Periplasmic. Residues 356 to 376 (LFPIVGAGYAIVYYTVFRVLI) traverse the membrane as a helical segment. Residues 377–477 (KALDLKTPGR…TEMDEYIRNS (101 aa)) lie on the Cytoplasmic side of the membrane. In terms of domain architecture, PTS EIIB type-1 spans 399–477 (SEMAPALVAA…TEMDEYIRNS (79 aa)). The Phosphocysteine intermediate; for EIIB activity role is filled by cysteine 421. A Phosphocysteine modification is found at cysteine 421.

The protein localises to the cell inner membrane. The catalysed reaction is N(pros)-phospho-L-histidyl-[protein] + D-glucose(out) = D-glucose 6-phosphate(in) + L-histidyl-[protein]. The phosphoenolpyruvate-dependent sugar phosphotransferase system (sugar PTS), a major carbohydrate active transport system, catalyzes the phosphorylation of incoming sugar substrates concomitantly with their translocation across the cell membrane. The enzyme II complex composed of PtsG and Crr is involved in glucose transport. Also functions as a chemoreceptor monitoring the environment for changes in sugar concentration. It can also phosphorylate mannose, methyl alpha-glucoside and 2-deoxy-glucose. This is PTS system glucose-specific EIICB component (ptsG) from Salmonella typhimurium (strain LT2 / SGSC1412 / ATCC 700720).